A 354-amino-acid chain; its full sequence is V-type proton ATPase subunit C (354 aa).

The protein belongs to the V-ATPase C subunit family. As to quaternary structure, V-ATPase is a heteromultimeric enzyme composed of a peripheral catalytic V1 complex (components A to H) attached to an integral membrane V0 proton pore complex (components: a, c, c', c'' and d).

It localises to the vacuole membrane. Subunit of the peripheral V1 complex of vacuolar ATPase. Subunit C is necessary for the assembly of the catalytic sector of the enzyme and is likely to have a specific function in its catalytic activity. V-ATPase is responsible for acidifying a variety of intracellular compartments in eukaryotic cells. The polypeptide is V-type proton ATPase subunit C (VATC) (Hordeum vulgare (Barley)).